The primary structure comprises 341 residues: MSSAAMLTAEDSLEPTLQNLLDQKTLRWVFVGGKGGVGKTTTSCSLAIQLAKVRKSVLLISTDPAHNLSDAFGQKFGKEARLIDGFTNLSAMEIDPNGSIQDLLAASGGQGDDSMGGLGIGGMMQDLAFSIPGVDEAMSFAEVLKQVKSLSYEVIIFDTAPTGHTLRFLQFPTVLEKALAKLAQLSTQFGPMLNSILGGRGGLPGGQNLDEILSKMESLRETIAEVNAQFKDADLTTFVCVCIAEFLSLYETERMIQELTSYHIDTHCIVVNQLLFPGKDSSCEQCKARRKMQKKYLNEIEELYEDFNVVRMPMLVEEVRGKEKLEKFSDMLVHPYVPPQE.

Residue 34–41 (KGGVGKTT) coordinates ATP. The active site involves Asp63. ATP contacts are provided by Glu245 and Asn272. Cys283 and Cys286 together coordinate Zn(2+).

This sequence belongs to the arsA ATPase family. In terms of assembly, homodimer.

The protein localises to the cytoplasm. Its subcellular location is the endoplasmic reticulum. In terms of biological role, ATPase required for the post-translational delivery of tail-anchored (TA) proteins to the endoplasmic reticulum. Recognizes and selectively binds the transmembrane domain of TA proteins in the cytosol. This complex then targets to the endoplasmic reticulum by membrane-bound receptors, where the tail-anchored protein is released for insertion. This process is regulated by ATP binding and hydrolysis. ATP binding drives the homodimer towards the closed dimer state, facilitating recognition of newly synthesized TA membrane proteins. ATP hydrolysis is required for insertion. Subsequently, the homodimer reverts towards the open dimer state, lowering its affinity for the membrane-bound receptor, and returning it to the cytosol to initiate a new round of targeting. This is ATPase GET3 from Paracoccidioides lutzii (strain ATCC MYA-826 / Pb01) (Paracoccidioides brasiliensis).